The chain runs to 386 residues: Methionyl-tRNA formyltransferase, mitochondrial (386 aa).

It belongs to the Fmt family.

It localises to the mitochondrion. The enzyme catalyses L-methionyl-tRNA(fMet) + (6R)-10-formyltetrahydrofolate = N-formyl-L-methionyl-tRNA(fMet) + (6S)-5,6,7,8-tetrahydrofolate + H(+). In terms of biological role, methionyl-tRNA formyltransferase that formylates methionyl-tRNA in mitochondria and is crucial for translation initiation. This Mus musculus (Mouse) protein is Methionyl-tRNA formyltransferase, mitochondrial (Mtfmt).